Consider the following 456-residue polypeptide: MTLRPQLARYKDKTMTSVSFYEYSKLNAEEKAALLRRSETDISGFIEKVAPILEAVRTEGDKALARFGRELDKADVTEANLKVTAAEFDAAFKLVDASVLESVQFGIDNIRKFHEEQKPEAMWLKEIRPGAFAGDRFTPIQSVALYVPRGKGSFPSVTMMTSVPAVVAGVPNLAIVTPPAPDGSVDAATLVAARLAGVETVYKAGGAQAVAAVAYGTETVKPALKIVGPGSPWVVAAKRSLSGVIDTGLPAGPSEVMILADDTVHGGLAALDLLIEAEHGPDSSAYLVTHSGRVAEEALAALPEHWARMTEQRTAFSKTVLSGKTGGIVLTSSIEESYEFVNAYAPEHLELLSEQPFIHLGHITEASEILMGTHTPVSIANFSLGPNAVLPTSRWARTFGPLSVTDFVKRSSIGYVTAPAYPEFARHSHNLAIYEGFSSHALAVSPVRDAYLKKGA.

Position 279 (His-279) interacts with Zn(2+). Active-site proton acceptor residues include Glu-347 and His-348. His-440 lines the Zn(2+) pocket.

This sequence belongs to the histidinol dehydrogenase family. Zn(2+) is required as a cofactor.

In Rhizobium meliloti (strain 1021) (Ensifer meliloti), this protein is Histidinol dehydrogenase homolog.